A 606-amino-acid chain; its full sequence is Electron transfer flavoprotein-ubiquinone oxidoreductase, mitochondrial (606 aa).

59-73 provides a ligand contact to FAD; it reads VVIVGAGPSGLSTAI. A helical membrane pass occupies residues 448 to 468; that stretch reads PSLHWGTIPGLIYGALEMYIF. [4Fe-4S] cluster-binding residues include Cys-551, Cys-575, Cys-578, and Cys-581.

Belongs to the ETF-QO/FixC family. Monomer. It depends on [4Fe-4S] cluster as a cofactor. FAD serves as cofactor.

The protein localises to the mitochondrion inner membrane. The catalysed reaction is a ubiquinone + reduced [electron-transfer flavoprotein] = a ubiquinol + oxidized [electron-transfer flavoprotein] + H(+). In terms of biological role, accepts electrons from ETF and reduces ubiquinone. The sequence is that of Electron transfer flavoprotein-ubiquinone oxidoreductase, mitochondrial (etfdh) from Dictyostelium discoideum (Social amoeba).